A 494-amino-acid chain; its full sequence is MFLAKSLVCLALLAVANAQFDTNYASGRSGMVHLFEWKWDDIAAECENFLGPNGFAGVQVSPVNENAVKDSRPWWERYQPISYKLETRSGNEQQFASMVKRCNAVGVRIYVDVIFNHMAADGGTYGTGGSTASPSSKSYPGVPYSSLDFNPTCAINNYNDANQVRNCELVGLRDLNQGNSYVQDKVVEFLDHLIDLGVAGFRVDAAKHMWPADLAVIYGRLKNLNTDHGFASGSKAYIVQEVIDMGGEAISKSEYTGLGAITEFRHSDSIGKVFRGKDQLQYLTNWGTAWGFAASDRSLVFVDNHDNQRGHGAGGADVLTYKVPKQYKMASAFMLAHPFGTPRVMSSFSFSDTDQGPPTTDGHNIASPVFNSDNSCSGGWVCEHRWRQIYNMVAFRNTVGSDAIQNWWDNGSNQISFSRGSRGFVAFNNDNYDLNSSLQTGLPAGTYCDVISGSKSGSSCTGKTVSVGSDGRASIYIGSSEDDGVLAIHVNAKL.

Positions 1 to 18 (MFLAKSLVCLALLAVANA) are cleaved as a signal peptide. Pyrrolidone carboxylic acid is present on Q19. Residues C46 and C102 are joined by a disulfide bond. Ca(2+) is bound by residues N116, R165, and D174. Cysteines 153 and 167 form a disulfide. Residue R202 coordinates chloride. Residue D204 is the Nucleophile of the active site. A Ca(2+)-binding site is contributed by H208. The active-site Proton donor is the E241. Chloride contacts are provided by N304 and R343. 2 disulfides stabilise this stretch: C376–C382 and C448–C460.

The protein belongs to the glycosyl hydrolase 13 family. As to quaternary structure, monomer. It depends on Ca(2+) as a cofactor. Chloride serves as cofactor.

It carries out the reaction Endohydrolysis of (1-&gt;4)-alpha-D-glucosidic linkages in polysaccharides containing three or more (1-&gt;4)-alpha-linked D-glucose units.. The chain is Alpha-amylase A (Amy-d) from Drosophila mauritiana (Fruit fly).